Reading from the N-terminus, the 128-residue chain is Large ribosomal subunit protein bL12 (128 aa).

It belongs to the bacterial ribosomal protein bL12 family. Homodimer. Part of the ribosomal stalk of the 50S ribosomal subunit. Forms a multimeric L10(L12)X complex, where L10 forms an elongated spine to which 2 to 4 L12 dimers bind in a sequential fashion. Binds GTP-bound translation factors.

Forms part of the ribosomal stalk which helps the ribosome interact with GTP-bound translation factors. Is thus essential for accurate translation. This Corynebacterium jeikeium (strain K411) protein is Large ribosomal subunit protein bL12.